We begin with the raw amino-acid sequence, 229 residues long: Enolase-phosphatase E1 (229 aa).

Belongs to the HAD-like hydrolase superfamily. MasA/MtnC family. As to quaternary structure, monomer. It depends on Mg(2+) as a cofactor.

The enzyme catalyses 5-methylsulfanyl-2,3-dioxopentyl phosphate + H2O = 1,2-dihydroxy-5-(methylsulfanyl)pent-1-en-3-one + phosphate. It participates in amino-acid biosynthesis; L-methionine biosynthesis via salvage pathway; L-methionine from S-methyl-5-thio-alpha-D-ribose 1-phosphate: step 3/6. Its pathway is amino-acid biosynthesis; L-methionine biosynthesis via salvage pathway; L-methionine from S-methyl-5-thio-alpha-D-ribose 1-phosphate: step 4/6. Functionally, bifunctional enzyme that catalyzes the enolization of 2,3-diketo-5-methylthiopentyl-1-phosphate (DK-MTP-1-P) into the intermediate 2-hydroxy-3-keto-5-methylthiopentenyl-1-phosphate (HK-MTPenyl-1-P), which is then dephosphorylated to form the acireductone 1,2-dihydroxy-3-keto-5-methylthiopentene (DHK-MTPene). The protein is Enolase-phosphatase E1 of Pectobacterium carotovorum subsp. carotovorum (strain PC1).